We begin with the raw amino-acid sequence, 252 residues long: Short-chain dehydrogenase anuI (252 aa).

The NADP(+) site is built by L18, D65, N92, Y171, K175, and T206. The active-site Proton acceptor is Y171. Y171 functions as the Proton donor in the catalytic mechanism. Residue K175 is the Lowers pKa of active site Tyr of the active site.

The protein belongs to the short-chain dehydrogenases/reductases (SDR) family.

Functionally, highly reducing polyketide synthase; part of the gene cluster that mediates the biosynthesis of annullatin D, an alkylated aromatic polyketide with a fused dihydrobenzofuran lactone ring system that exhibits potent agonistic activities toward the cannabinoid receptors. AnuI does not seem to play a role within the pathway. The annullatin backbone 2-hydroxymethyl-3-pentylphenol is assembled from one acetyl-CoA starter unit and 5 malonyl-CoA elongation units by cooperation of the highly reducing polyketide synthase anuA, the short-chain dehydrogenase anuB and the oxidoreductase anuC, before being hydroxylated at the C-5 alkyl chain by the cytochrome P450 monooxygenase anuE to form (8S)-annullatin E. The prenyltransferase anuH subsequently installs one isoprenyl group at the benzene ring to form (8S)-annullatin J. Enzymatic or nonenzymatic dihydro-benzofuran ring formation between the prenyl and the phenolic hydroxyl groups in (8S)-annullatin J results in two diastereomers (2S,9S)-annullatin H and compound 12. The intermediate (2S,9S)-annullatin H is then converted to (2S,9S)-annullatin D by the FAD-linked oxidoreductase anuG-catalyzed five-member lactone ring formation. The isomer 12 acts as a substrate for the short-chain dehydrogenase anuF and is oxidized to (2R)-annullatin F, which is subsequently acetylated by an acetyltransferase leading to (2R)-annullatin G formation. The remaining enzymes identified within the cluster, anuD, anuI and anuJ, seem not to be involved in annullatin biosynthesis. The chain is Short-chain dehydrogenase anuI from Penicillium roqueforti (strain FM164).